The sequence spans 502 residues: Zinc finger protein 488 (502 aa).

Positions Arg-8–Asp-130 constitute an SET domain. Tyr-129 is a binding site for S-adenosyl-L-methionine. The C2H2-type 1; atypical zinc-finger motif lies at Tyr-151–Cys-174. Disordered stretches follow at residues Ser-267–Arg-303 and Pro-338–Phe-361. A compositionally biased stretch (polar residues) spans Pro-269–Phe-286. C2H2-type zinc fingers lie at residues Asn-438 to His-460 and Leu-479 to His-501.

The protein belongs to the krueppel C2H2-type zinc-finger protein family. Expressed in pMN progenitors and oligodendrocyte lineage cells in the embryo with expression declining in oligodendrocytes undergoing differentiation.

The protein resides in the nucleus. Transcriptional repressor. May have histone methyltransferase activity. Negatively regulates shh signaling activity in pMN progenitor cells which prevents their switch from motor neuron to oligodendrocyte precursor cell production. Independently of shh activity, also regulates oligodendrocyte formation. This chain is Zinc finger protein 488, found in Danio rerio (Zebrafish).